Here is a 271-residue protein sequence, read N- to C-terminus: Non-homologous end joining protein Ku (271 aa).

The Ku domain maps to Lys12–Ser194. The segment at Glu225–Asn249 is disordered.

This sequence belongs to the prokaryotic Ku family. Homodimer. Interacts with LigD.

In terms of biological role, with LigD forms a non-homologous end joining (NHEJ) DNA repair enzyme, which repairs dsDNA breaks with reduced fidelity. Binds linear dsDNA with 5'- and 3'- overhangs but not closed circular dsDNA nor ssDNA. Recruits and stimulates the ligase activity of LigD. The sequence is that of Non-homologous end joining protein Ku from Methylocella silvestris (strain DSM 15510 / CIP 108128 / LMG 27833 / NCIMB 13906 / BL2).